The chain runs to 559 residues: Actin-binding protein WASF1 (559 aa).

Disordered stretches follow at residues 170-202 (EDKR…DRRR), 304-383 (IENR…GVLH), and 412-490 (VHPL…HPST). The segment covering 182–202 (KNLDRPHEPEKVPRAPHDRRR) has biased composition (basic and acidic residues). A compositionally biased stretch (polar residues) spans 304–313 (IENRPQSPAT). A compositionally biased stretch (pro residues) spans 322–332 (PTPPPPPPPLP). Over residues 333–346 (SALSTSSLRASMTS) the composition is skewed to low complexity. Arginine 341 is modified (asymmetric dimethylarginine; alternate). At arginine 341 the chain carries Omega-N-methylarginine; alternate. Composition is skewed to pro residues over residues 347–360 (TPPP…PPPA), 423–437 (LPPP…PPGI), and 460–477 (STAP…PPSQ). Serine 489 is modified (phosphoserine). One can recognise a WH2 domain in the interval 497-514 (ARSVLLEAIRKGIQLRKV).

Belongs to the SCAR/WAVE family. In terms of assembly, component of the WAVE1 complex composed of ABI2, CYFIP1 or CYFIP2, BRK1, NCKAP1 and WASF1/WAVE1. Within the complex, a heterodimer containing NCKAP1 and CYFIP1 interacts with a heterotrimer formed by WAVE1, ABI2 and BRK1. CYFIP2 binds to activated RAC1 which causes the complex to dissociate, releasing activated WASF1. The complex can also be activated by NCK1. Binds actin and the Arp2/3 complex. Interacts with BAIAP2. Interacts with SHANK3; the interaction mediates the association of SHANK3 with the WAVE1 complex. Interacts with ABI1 (via N-terminus). Interacts with SORBS2; this interaction greatly enhances phosphorylation by ABL1 and dephosphorylation by PTPN12 and might mediate partial to focal adhesion sites.

The protein resides in the cytoplasm. It localises to the cytoskeleton. It is found in the synapse. Its subcellular location is the cell junction. The protein localises to the focal adhesion. Its function is as follows. Downstream effector molecule involved in the transmission of signals from tyrosine kinase receptors and small GTPases to the actin cytoskeleton. Promotes formation of actin filaments. Part of the WAVE complex that regulates lamellipodia formation. The WAVE complex regulates actin filament reorganization via its interaction with the Arp2/3 complex. As component of the WAVE1 complex, required for BDNF-NTRK2 endocytic trafficking and signaling from early endosomes. Also involved in the regulation of mitochondrial dynamics. This is Actin-binding protein WASF1 (WASF1) from Pongo abelii (Sumatran orangutan).